The chain runs to 156 residues: Small ribosomal subunit protein uS7 (156 aa).

The protein belongs to the universal ribosomal protein uS7 family. As to quaternary structure, part of the 30S ribosomal subunit. Contacts proteins S9 and S11.

Its function is as follows. One of the primary rRNA binding proteins, it binds directly to 16S rRNA where it nucleates assembly of the head domain of the 30S subunit. Is located at the subunit interface close to the decoding center, probably blocks exit of the E-site tRNA. This chain is Small ribosomal subunit protein uS7, found in Rhizobium etli (strain ATCC 51251 / DSM 11541 / JCM 21823 / NBRC 15573 / CFN 42).